The following is a 339-amino-acid chain: Ketol-acid reductoisomerase (NADP(+)) (339 aa).

Residues 1 to 182 form the KARI N-terminal Rossmann domain; that stretch reads MRVYYDRDAD…GGGRSGIIET (182 aa). Residues 24–27, lysine 48, serine 51, threonine 53, and 83–86 each bind NADP(+); these read YGSQ and DELQ. Residue histidine 108 is part of the active site. Glycine 134 lines the NADP(+) pocket. The region spanning 183 to 328 is the KARI C-terminal knotted domain; the sequence is TFQEECETDL…AKLRGMMPWI (146 aa). Mg(2+) is bound by residues aspartate 191, glutamate 195, glutamate 227, and glutamate 231. A substrate-binding site is contributed by serine 252.

This sequence belongs to the ketol-acid reductoisomerase family. Mg(2+) serves as cofactor.

It catalyses the reaction (2R)-2,3-dihydroxy-3-methylbutanoate + NADP(+) = (2S)-2-acetolactate + NADPH + H(+). It carries out the reaction (2R,3R)-2,3-dihydroxy-3-methylpentanoate + NADP(+) = (S)-2-ethyl-2-hydroxy-3-oxobutanoate + NADPH + H(+). Its pathway is amino-acid biosynthesis; L-isoleucine biosynthesis; L-isoleucine from 2-oxobutanoate: step 2/4. The protein operates within amino-acid biosynthesis; L-valine biosynthesis; L-valine from pyruvate: step 2/4. Involved in the biosynthesis of branched-chain amino acids (BCAA). Catalyzes an alkyl-migration followed by a ketol-acid reduction of (S)-2-acetolactate (S2AL) to yield (R)-2,3-dihydroxy-isovalerate. In the isomerase reaction, S2AL is rearranged via a Mg-dependent methyl migration to produce 3-hydroxy-3-methyl-2-ketobutyrate (HMKB). In the reductase reaction, this 2-ketoacid undergoes a metal-dependent reduction by NADPH to yield (R)-2,3-dihydroxy-isovalerate. The protein is Ketol-acid reductoisomerase (NADP(+)) of Allorhizobium ampelinum (strain ATCC BAA-846 / DSM 112012 / S4) (Agrobacterium vitis (strain S4)).